Reading from the N-terminus, the 2776-residue chain is A-kinase anchor protein 13 (2776 aa).

Disordered stretches follow at residues 371–401 (KNKD…SCLQ), 452–518 (EPDA…TETT), 547–584 (PAEA…QSSP), 618–641 (TMPG…PAQS), 653–689 (EAGT…ESTM), 760–871 (VSQT…SPTA), 910–951 (ALGQ…IPGL), 995–1029 (GAAK…LPSG), 1431–1508 (LCDT…MDSI), 1527–1546 (PFRR…AEMN), and 1565–1603 (RRSF…FGGE). The segment covering 389–401 (DSGSASHQDSCLQ) has biased composition (polar residues). An important for interaction with PRKAR2A region spans residues 493–515 (QNNKPQVGEGTKERLENSDSSTT). Positions 560–573 (PTEKPGMETQERGC) are enriched in basic and acidic residues. Residues 659-672 (AEATHQPSTVTSSG) are compositionally biased toward polar residues. The segment covering 773-788 (SPPASSFSLASSPESE) has biased composition (low complexity). A Phosphoserine modification is found at S784. T809 carries the phosphothreonine modification. 2 stretches are compositionally biased toward basic and acidic residues: residues 820-834 (DGPD…DKVG) and 914-940 (DGKD…EDQR). T941 is subject to Phosphothreonine. A compositionally biased stretch (polar residues) spans 1005–1020 (TSLSADSKQKASSTEQ). Residues 1433 to 1444 (DTTGSSSSTDDT) show a composition bias toward low complexity. Over residues 1454-1476 (GSDVSLPQTSKLNRSRNHQSANG) the composition is skewed to polar residues. A phosphoserine mark is found at S1455, S1473, S1507, S1532, and S1569. An important for interaction with MAP2K3 region spans residues 1552 to 1678 (RALGHVVRRP…SRPFHSTSAN (127 aa)). Residues 1583–1594 (SSSLEMSSANSS) are compositionally biased toward low complexity. Phosphoserine is present on residues S1608, S1611, and S1613. K1637 is subject to N6-methyllysine. The disordered stretch occupies residues 1711-1756 (TFSYIRNKMSSSKKSKEKEKEKDKIKEKEKDSKEKEKDKKTLNGHT). The span at 1724–1751 (KSKEKEKEKDKIKEKEKDSKEKEKDKKT) shows a compositional bias: basic and acidic residues. A Phorbol-ester/DAG-type zinc finger spans residues 1754-1801 (GHTFSPIPIVGPISCSQCMKPFTNKDAYTCAGCGAFVHKGCRENLASC). A phosphoserine mark is found at S1839, S1858, and S1892. The interval 1882-2776 (MSNTWKFLSH…VPAEGEEIFC (895 aa)) is interaction with ESR1. Residue T1893 is modified to Phosphothreonine. Phosphoserine is present on residues S1895 and S1908. Residues 1957-2154 (KRQEVIYELM…KDVIGAVDSK (198 aa)) form the DH domain. A PH domain is found at 2194–2296 (KLVRDGSVFL…WIQIIQDTIN (103 aa)). A phosphoserine mark is found at S2308 and S2361. Residues 2308–2345 (SENEEEKKLLDTKARELKEQLQQKDQQILLLLEEKEMI) adopt a coiled-coil conformation. T2431 bears the Phosphothreonine mark. A disordered region spans residues 2436–2471 (DCHQMNASKGGEKEEGDDGQDLRRTESDSGLKKGGN). The span at 2455 to 2466 (QDLRRTESDSGL) shows a compositional bias: basic and acidic residues. Phosphoserine occurs at positions 2527 and 2530. Residues 2532 to 2646 (LIEQEKQRSL…ERLSQRQMDQ (115 aa)) are a coiled coil. 2 disordered regions span residues 2549–2605 (ANLQ…EELQ) and 2626–2776 (EREQ…EIFC). Basic and acidic residues-rich tracts occupy residues 2558 to 2605 (HLEE…EELQ) and 2626 to 2640 (EREQ…ERLS). Polar residues-rich tracts occupy residues 2641–2653 (QRQM…QVSN), 2665–2700 (LPNS…SISR), and 2713–2727 (SASQ…SQAP). Phosphoserine is present on residues S2673 and S2692.

Interacts with the cAMP-dependent protein kinase (PKA) holoenzyme and with the regulatory subunit PRKAR2A. Interacts with RHOA. Also interacts with RHOB and RHOC. Identified in a ternary complex with RHOA and PRKAR2A. Identified in a complex with NR3C1 and RHOA. Interacts with BRAF and KSR1. Identified in a complex with BRAF and KSR1. Component of a signaling complex containing at least AKAP13, PKN1, MAPK14, ZAK and MAP2K3. Within this complex, AKAP13 interacts directly with PKN1, which in turn recruits MAPK14, MAP2K3 and ZAK. Interacts (phosphorylated form) with YWHAB and YWHAZ. Interaction with YWHAB inhibits activation of RHOA, interferes with PKN1 binding and activation of MAP kinases. Interacts with GNA12. Interacts with IKBKB. Interacts with ESR1, THRA, PPARA and NME2. Interacts (via the C-terminal domain after the PH domain) with MEF2C and RXRB. Interacts (via the C-terminal domain after the PH domain) with PRKD1. As to expression, detected in embryonic heart, limb bud, first branchial arch and forebrain (at protein level). Detected in heart. Detected in perichondrium, but not in the bone growth plate.

It localises to the cytoplasm. It is found in the cytosol. Its subcellular location is the cell cortex. The protein resides in the cytoskeleton. The protein localises to the nucleus. It localises to the membrane. Scaffold protein that plays an important role in assembling signaling complexes downstream of several types of G protein-coupled receptors. Activates RHOA in response to signaling via G protein-coupled receptors via its function as Rho guanine nucleotide exchange factor. May also activate other Rho family members. Part of a kinase signaling complex that links ADRA1A and ADRA1B adrenergic receptor signaling to the activation of downstream p38 MAP kinases, such as MAPK11 and MAPK14. Part of a signaling complex that links ADRA1B signaling to the activation of RHOA and IKBKB/IKKB, leading to increased NF-kappa-B transcriptional activity. Part of a RHOA-dependent signaling cascade that mediates responses to lysophosphatidic acid (LPA), a signaling molecule that activates G-protein coupled receptors and potentiates transcriptional activation of the glucocorticoid receptor NR3C1. Part of a signaling cascade that stimulates MEF2C-dependent gene expression in response to lysophosphatidic acid (LPA). Part of a signaling pathway that activates MAPK11 and/or MAPK14 and leads to increased transcription activation of the estrogen receptors ESR1 and ESR2. Part of a signaling cascade that links cAMP and EGFR signaling to BRAF signaling and to PKA-mediated phosphorylation of KSR1, leading to the activation of downstream MAP kinases, such as MAPK1 or MAPK3. Functions as a scaffold protein that anchors cAMP-dependent protein kinase (PKA) and PRKD1. This promotes activation of PRKD1, leading to increased phosphorylation of HDAC5 and ultimately cardiomyocyte hypertrophy. Has no guanine nucleotide exchange activity on CDC42, Ras or Rac. Required for normal embryonic heart development, and in particular for normal sarcomere formation in the developing cardiomyocytes. Plays a role in cardiomyocyte growth and cardiac hypertrophy in response to activation of the beta-adrenergic receptor by phenylephrine or isoproterenol. Required for normal adaptive cardiac hypertrophy in response to pressure overload. Plays a role in osteogenesis. This is A-kinase anchor protein 13 from Mus musculus (Mouse).